The primary structure comprises 163 residues: Nucleotide-binding protein C8J_0350 (163 aa).

The protein belongs to the YajQ family.

Functionally, nucleotide-binding protein. The protein is Nucleotide-binding protein C8J_0350 of Campylobacter jejuni subsp. jejuni serotype O:6 (strain 81116 / NCTC 11828).